Here is a 161-residue protein sequence, read N- to C-terminus: MQDAITSVINAADVQGKYLDDSSVEKLRGYFQTGELRVRAAATIAANAATIIKESVAKSLLYSDITRPGGNMYTTRRYAACIRDLDYYLRYATYGMLAGDPSILEERVLNGLKETYNSLGVPIGATIQAILAMKEVTISLVGPDAGKEMGLYFDYICSGLG.

Residue asparagine 71 is modified to N4-methylasparagine. A (2R,3E)-phycocyanobilin-binding site is contributed by cysteine 81.

This sequence belongs to the phycobiliprotein family. Heterodimer of an alpha and a beta chain. Post-translationally, contains one covalently linked phycocyanobilin chromophore.

It is found in the plastid. The protein resides in the chloroplast thylakoid membrane. In terms of biological role, light-harvesting photosynthetic bile pigment-protein from the phycobiliprotein complex. Allophycocyanin has a maximum absorption at approximately 650 nanometers. The protein is Allophycocyanin beta chain (apcB) of Pyropia haitanensis (Red seaweed).